A 145-amino-acid polypeptide reads, in one-letter code: Large ribosomal subunit protein uL16 (145 aa).

Belongs to the universal ribosomal protein uL16 family. Part of the 50S ribosomal subunit.

Functionally, binds 23S rRNA and is also seen to make contacts with the A and possibly P site tRNAs. The polypeptide is Large ribosomal subunit protein uL16 (Herpetosiphon aurantiacus (strain ATCC 23779 / DSM 785 / 114-95)).